The following is a 105-amino-acid chain: MAEWSGEYISPYAEHGKKSEQVKKITVSIPLKVLKILTDERTRRQVNNLRHATNSELLCEAFLHAFTGQPLPNDEDLRKERSDEIPEEAKIIMRELGIDPDTWEY.

The protein belongs to the MetJ family. As to quaternary structure, homodimer.

The protein localises to the cytoplasm. Functionally, this regulatory protein, when combined with SAM (S-adenosylmethionine) represses the expression of the methionine regulon and of enzymes involved in SAM synthesis. This Citrobacter koseri (strain ATCC BAA-895 / CDC 4225-83 / SGSC4696) protein is Met repressor.